Consider the following 360-residue polypeptide: uncharacterized protein (360 aa).

In terms of domain architecture, ABC transporter spans 4-235 (LSLQHIQKIY…PANMFVAGFI (232 aa)). 37 to 44 (GPSGCGKS) contributes to the ATP binding site.

It belongs to the ABC transporter superfamily.

This is an uncharacterized protein from Escherichia coli O157:H7.